We begin with the raw amino-acid sequence, 295 residues long: Glycine N-phenylacetyltransferase (295 aa).

Residue Lys-43 is modified to N6-acetyllysine. Residue Lys-48 is modified to N6-acetyllysine; alternate. Lys-48 is subject to N6-succinyllysine; alternate. Lys-80 is modified (N6-acetyllysine). Position 182 is an N6-acetyllysine; alternate (Lys-182). Lys-182 carries the post-translational modification N6-succinyllysine; alternate.

It belongs to the glycine N-acyltransferase family.

The protein localises to the mitochondrion. The enzyme catalyses phenylacetyl-CoA + glycine = phenylacetylglycine + CoA + H(+). Functionally, mitochondrial acyltransferase which transfers the acyl group to the N-terminus of glycine. Can conjugate a multitude of substrates to form a variety of N-acylglycines. Catalyzes the conjugation of arylacetic acids with glycine but does not have activity towards any alkyl-CoA. The sequence is that of Glycine N-phenylacetyltransferase from Bos taurus (Bovine).